Reading from the N-terminus, the 294-residue chain is Nucleotide-binding protein CLD_1131 (294 aa).

8-15 (GLSGAGKT) contributes to the ATP binding site. Position 59–62 (59–62 (DIRG)) interacts with GTP.

Belongs to the RapZ-like family.

Functionally, displays ATPase and GTPase activities. The polypeptide is Nucleotide-binding protein CLD_1131 (Clostridium botulinum (strain Okra / Type B1)).